A 585-amino-acid polypeptide reads, in one-letter code: A-type ATP synthase subunit A (585 aa).

Position 231–238 (231–238 (GPFGSGKT)) interacts with ATP.

It belongs to the ATPase alpha/beta chains family. As to quaternary structure, has multiple subunits with at least A(3), B(3), C, D, E, F, H, I and proteolipid K(x).

Its subcellular location is the cell membrane. The enzyme catalyses ATP + H2O + 4 H(+)(in) = ADP + phosphate + 5 H(+)(out). Functionally, component of the A-type ATP synthase that produces ATP from ADP in the presence of a proton gradient across the membrane. The A chain is the catalytic subunit. In Desulfurococcus sp. (strain SY), this protein is A-type ATP synthase subunit A.